The chain runs to 206 residues: Small ribosomal subunit protein uS4 (206 aa).

The S4 RNA-binding domain maps to 96–156 (NRLDNVTYRI…KNSKLQSRIK (61 aa)).

Belongs to the universal ribosomal protein uS4 family. As to quaternary structure, part of the 30S ribosomal subunit. Contacts protein S5. The interaction surface between S4 and S5 is involved in control of translational fidelity.

One of the primary rRNA binding proteins, it binds directly to 16S rRNA where it nucleates assembly of the body of the 30S subunit. Functionally, with S5 and S12 plays an important role in translational accuracy. This is Small ribosomal subunit protein uS4 from Buchnera aphidicola subsp. Baizongia pistaciae (strain Bp).